A 397-amino-acid chain; its full sequence is Phosphoglycerate kinase (397 aa).

Substrate contacts are provided by residues 21 to 23, arginine 37, 60 to 63, arginine 119, and arginine 152; these read DFN and HLGR. Residues lysine 203, glycine 294, glutamate 325, and 354–357 contribute to the ATP site; that span reads GGDS.

Belongs to the phosphoglycerate kinase family. Monomer.

Its subcellular location is the cytoplasm. The enzyme catalyses (2R)-3-phosphoglycerate + ATP = (2R)-3-phospho-glyceroyl phosphate + ADP. It participates in carbohydrate degradation; glycolysis; pyruvate from D-glyceraldehyde 3-phosphate: step 2/5. This is Phosphoglycerate kinase from Chlorobium phaeobacteroides (strain BS1).